A 142-amino-acid chain; its full sequence is Putative transmembrane protein INAFM1 (142 aa).

The segment covering 1 to 19 (MRGTSCVGGGAESPGGAGL) has biased composition (gly residues). Residues 1–22 (MRGTSCVGGGAESPGGAGLSEG) form a disordered region. A helical membrane pass occupies residues 36 to 56 (YFLCVSLAAVLLAVYYGLIWV). Disordered stretches follow at residues 61 to 83 (PAAP…PGVP) and 99 to 142 (VPGG…RRPG). Over residues 64 to 83 (PAGPQPSAPSPPCAARPGVP) the composition is skewed to pro residues. Positions 99–111 (VPGGPRPQLQLPL) are enriched in low complexity. Residues 117-142 (YSDPDRRPSRQTPRETPEAAEGRRPG) show a composition bias toward basic and acidic residues.

It is found in the membrane. This Homo sapiens (Human) protein is Putative transmembrane protein INAFM1.